The primary structure comprises 192 residues: uncharacterized protein (192 aa).

The 132-residue stretch at 29-160 (HRQAAVLIPI…PLDIYRRGDS (132 aa)) folds into the Nudix hydrolase domain. The Nudix box signature appears at 67–89 (GAVDDTDASVIAAALREAEEEVA). Positions 83 and 87 each coordinate Mg(2+).

The protein belongs to the Nudix hydrolase family. PCD1 subfamily. It depends on Mn(2+) as a cofactor. Mg(2+) is required as a cofactor.

In terms of biological role, probably mediates the hydrolysis of some nucleoside diphosphate derivatives. This is an uncharacterized protein from Shigella flexneri.